A 153-amino-acid chain; its full sequence is DNA gyrase inhibitor 1 (153 aa).

This sequence belongs to the DNA gyrase inhibitor family. Interacts with DNA gyrase.

The protein localises to the cytoplasm. Inhibits the supercoiling activity of DNA gyrase. Acts by inhibiting DNA gyrase at an early step, prior to (or at the step of) binding of DNA by the gyrase. It protects cells against toxins that target DNA gyrase, by inhibiting activity of these toxins and reducing the formation of lethal double-strand breaks in the cell. This is DNA gyrase inhibitor 1 from Dickeya dadantii (strain 3937) (Erwinia chrysanthemi (strain 3937)).